Consider the following 248-residue polypeptide: tRNA pseudouridine synthase A (248 aa).

Asp-53 functions as the Nucleophile in the catalytic mechanism. Substrate is bound at residue Tyr-116.

It belongs to the tRNA pseudouridine synthase TruA family. Homodimer.

The enzyme catalyses uridine(38/39/40) in tRNA = pseudouridine(38/39/40) in tRNA. Functionally, formation of pseudouridine at positions 38, 39 and 40 in the anticodon stem and loop of transfer RNAs. In Helicobacter hepaticus (strain ATCC 51449 / 3B1), this protein is tRNA pseudouridine synthase A.